A 197-amino-acid polypeptide reads, in one-letter code: Imidazoleglycerol-phosphate dehydratase (197 aa).

Belongs to the imidazoleglycerol-phosphate dehydratase family.

The protein resides in the cytoplasm. The enzyme catalyses D-erythro-1-(imidazol-4-yl)glycerol 3-phosphate = 3-(imidazol-4-yl)-2-oxopropyl phosphate + H2O. Its pathway is amino-acid biosynthesis; L-histidine biosynthesis; L-histidine from 5-phospho-alpha-D-ribose 1-diphosphate: step 6/9. The polypeptide is Imidazoleglycerol-phosphate dehydratase (Halorhodospira halophila (strain DSM 244 / SL1) (Ectothiorhodospira halophila (strain DSM 244 / SL1))).